The primary structure comprises 263 residues: Exosome complex component Rrp4 (263 aa).

The S1 motif domain occupies 51 to 127 (GKYIPSRKDF…KAMKVELSMR (77 aa)). The 62-residue stretch at 135 to 196 (SKGRIIEVVP…DRLTTAIEMI (62 aa)) folds into the KH domain. Residues 213 to 263 (LRGEPEGTEGSDEEQLVDEEVAGVSLEDDDVTEETSRKVDVLLDNDTDETN) form a disordered region. Positions 218–245 (EGTEGSDEEQLVDEEVAGVSLEDDDVTE) are enriched in acidic residues.

This sequence belongs to the RRP4 family. Component of the archaeal exosome complex. Forms a trimer of Rrp4 and/or Csl4 subunits. The trimer associates with a hexameric ring-like arrangement composed of 3 Rrp41-Rrp42 heterodimers.

The protein resides in the cytoplasm. In terms of biological role, non-catalytic component of the exosome, which is a complex involved in RNA degradation. Increases the RNA binding and the efficiency of RNA degradation. Confers strong poly(A) specificity to the exosome. The protein is Exosome complex component Rrp4 of Methanococcoides burtonii (strain DSM 6242 / NBRC 107633 / OCM 468 / ACE-M).